The following is a 475-amino-acid chain: MSKKLHIKTWGCQMNEYDSSKMADLLDEYEGYTLTDNAEEADVLLLNTCSIREKAQEKVFHQLGRWKTLKDKKPGLIIGVGGCVASQEGKAIKERAQCVDLIFGPQTLHRLPEMIDQIKDGKKAVIDVSFPEVEKFDRLPEPRAEGPSAFVSIMEGCSKYCSFCVVPYTRGEEVSRPLDDVILEIAQLAEQGVREVNLLGQNVNAYRGATHDDEICTFAELLRYVAAIDGIDRLRFTTSHPIEFTQDIIDVYEDTPELVSFLHLPVQSGSDLILTQMKRGHMAIEYKSIIRRLRKARPDILISSDFIIGFPGESKQDFADTMKLIEDIQFDHSFSFIYSARPGTPAADLPDNVSLDEKKERLAILQDRITQQAMRYSRQMVGTVQRILVEGPSVKNPMELRGRTENSRVVNFEGLHEHIGKFVDVEIVDVYTNSLRGVFIRGEDEMDLRRDLRPSDITAKYKQADDLGVTLFTPA.

Residues 3–120 enclose the MTTase N-terminal domain; it reads KKLHIKTWGC…LPEMIDQIKD (118 aa). Residues cysteine 12, cysteine 49, cysteine 83, cysteine 157, cysteine 161, and cysteine 164 each coordinate [4Fe-4S] cluster. Positions 143–375 constitute a Radical SAM core domain; the sequence is RAEGPSAFVS…QDRITQQAMR (233 aa). A TRAM domain is found at 378 to 441; it reads RQMVGTVQRI…TNSLRGVFIR (64 aa).

The protein belongs to the methylthiotransferase family. MiaB subfamily. In terms of assembly, monomer. Requires [4Fe-4S] cluster as cofactor.

Its subcellular location is the cytoplasm. The enzyme catalyses N(6)-dimethylallyladenosine(37) in tRNA + (sulfur carrier)-SH + AH2 + 2 S-adenosyl-L-methionine = 2-methylsulfanyl-N(6)-dimethylallyladenosine(37) in tRNA + (sulfur carrier)-H + 5'-deoxyadenosine + L-methionine + A + S-adenosyl-L-homocysteine + 2 H(+). In terms of biological role, catalyzes the methylthiolation of N6-(dimethylallyl)adenosine (i(6)A), leading to the formation of 2-methylthio-N6-(dimethylallyl)adenosine (ms(2)i(6)A) at position 37 in tRNAs that read codons beginning with uridine. This is tRNA-2-methylthio-N(6)-dimethylallyladenosine synthase from Shewanella pealeana (strain ATCC 700345 / ANG-SQ1).